The following is a 172-amino-acid chain: Large ribosomal subunit protein uL5 (172 aa).

It belongs to the universal ribosomal protein uL5 family. Part of the 50S ribosomal subunit; contacts the 5S rRNA and probably tRNA. Forms a bridge to the 30S subunit in the 70S ribosome.

This is one of the proteins that bind and probably mediate the attachment of the 5S RNA into the large ribosomal subunit, where it forms part of the central protuberance. In the 70S ribosome it contacts protein S13 of the 30S subunit (bridge B1b), connecting the 2 subunits; this bridge is implicated in subunit movement. May contact the P site tRNA; the 5S rRNA and some of its associated proteins might help stabilize positioning of ribosome-bound tRNAs. The chain is Large ribosomal subunit protein uL5 from Haloferax mediterranei (strain ATCC 33500 / DSM 1411 / JCM 8866 / NBRC 14739 / NCIMB 2177 / R-4) (Halobacterium mediterranei).